The sequence spans 258 residues: Tryptophan synthase alpha chain (258 aa).

Residues E52 and D63 each act as proton acceptor in the active site.

Belongs to the TrpA family. Tetramer of two alpha and two beta chains.

The enzyme catalyses (1S,2R)-1-C-(indol-3-yl)glycerol 3-phosphate + L-serine = D-glyceraldehyde 3-phosphate + L-tryptophan + H2O. It participates in amino-acid biosynthesis; L-tryptophan biosynthesis; L-tryptophan from chorismate: step 5/5. Its function is as follows. The alpha subunit is responsible for the aldol cleavage of indoleglycerol phosphate to indole and glyceraldehyde 3-phosphate. The sequence is that of Tryptophan synthase alpha chain from Streptococcus pneumoniae (strain Taiwan19F-14).